The following is a 439-amino-acid chain: Branched-chain amino acid permease BrnQ (439 aa).

Residues 1-9 are Cytoplasmic-facing; that stretch reads MTHQLKSRD. The chain crosses the membrane as a helical span at residues 10–30; that stretch reads IIALGFMTFALFVGAGNIIFP. Residues 31 to 43 are Periplasmic-facing; that stretch reads PMVGLQAGEHVWT. A helical membrane pass occupies residues 44-64; sequence AAIGFLITAVGLPVLTVVALA. Residues 65-79 lie on the Cytoplasmic side of the membrane; it reads KVGGGVDSLSTPIGK. A helical transmembrane segment spans residues 80 to 100; the sequence is VAGLLLATVCYLAVGPLFATP. The Periplasmic portion of the chain corresponds to 101 to 118; sequence RTATVSFEVGIAPLTGDS. The chain crosses the membrane as a helical span at residues 119–139; the sequence is AMPLLIYSVVYFAIVILVSLY. Residues 140-149 are Cytoplasmic-facing; that stretch reads PGKLLDTVGN. Residues 150 to 170 traverse the membrane as a helical segment; the sequence is FLAPLKIIALVILSVAAIVWP. Residues 171-189 are Periplasmic-facing; the sequence is AGPISNALDAYQNAAFSNG. A helical membrane pass occupies residues 190–210; it reads FVNGYLTMDTLGAMVFGIVIV. Residues 211-226 are Cytoplasmic-facing; it reads NAARSRGVTEARLLTR. A helical membrane pass occupies residues 227-247; the sequence is YTVWAGLMAGVGLTLLYLALF. At 248-277 the chain is on the periplasmic side; that stretch reads RLGSDSATLVDQSANGAAILHAYVQHTFGG. A helical membrane pass occupies residues 278–298; the sequence is AGSFLLAALIFIACLVTAVGL. Residues 299-316 lie on the Cytoplasmic side of the membrane; the sequence is TCACAEFFAQYIPLSYRT. A helical membrane pass occupies residues 317-337; sequence LVFILGGFSMVVSNLGLSHLI. Position 338 (glutamine 338) is a topological domain, periplasmic. The chain crosses the membrane as a helical span at residues 339 to 359; sequence ISIPVLTAIYPPCIALVVLSF. Residues 360–369 are Cytoplasmic-facing; that stretch reads TRSWWHNSTR. The helical transmembrane segment at 370 to 390 threads the bilayer; that stretch reads IIAPAMFISLLFGILDGIKAS. At 391–404 the chain is on the periplasmic side; the sequence is AFGDMLPAWSQRLP. The chain crosses the membrane as a helical span at residues 405–425; the sequence is LAEQGLAWLMPTVVMVILAII. Residues 426–439 lie on the Cytoplasmic side of the membrane; that stretch reads WDRAAGRQVTSSAH.

This sequence belongs to the branched chain amino acid transporter family.

The protein localises to the cell inner membrane. In terms of biological role, liv-II branched chain amino acid transport system, which transports leucine, valine and isoleucine. This Salmonella typhimurium (strain LT2 / SGSC1412 / ATCC 700720) protein is Branched-chain amino acid permease BrnQ.